Reading from the N-terminus, the 250-residue chain is 23S rRNA (guanosine-2'-O-)-methyltransferase RlmB (250 aa).

S-adenosyl-L-methionine contacts are provided by Gly-198, Leu-218, and Leu-227.

The protein belongs to the class IV-like SAM-binding methyltransferase superfamily. RNA methyltransferase TrmH family. RlmB subfamily.

The protein resides in the cytoplasm. It catalyses the reaction guanosine(2251) in 23S rRNA + S-adenosyl-L-methionine = 2'-O-methylguanosine(2251) in 23S rRNA + S-adenosyl-L-homocysteine + H(+). In terms of biological role, specifically methylates the ribose of guanosine 2251 in 23S rRNA. This chain is 23S rRNA (guanosine-2'-O-)-methyltransferase RlmB, found in Pseudomonas syringae pv. tomato (strain ATCC BAA-871 / DC3000).